The sequence spans 418 residues: MTAPKSEFLAVVRDRGFIHQCTDLDGLDALLAKGPVSAYIGFDCTADSLHVGSLIQIMLLHWLQRTGHRPVVLMGGGTTRIGDPSFRDEARPLLTDEKIGQNMAGIRQVFSRFLSFGEGATDAVMVNNADWLDGLAYIPFLRDFGRHFSVNRMLTFDSVRLRLDREQPLSFLEFNYMILQAYDFLELGRRTGVRLQMGGSDQWGNIVNGVELGRRVDGLELFGLTSPLITTASGAKMGKTAQGAVWLNEARLPAYDYWQFWRNTEDADVGRFLRLFTDLPLDEVARLEALGGAEINEAKKILAERATTMAHGPEAALTAAETARKVFEQGGTGDALPTHDVAAEALAAGLPLAEMMRATGLAASGKEVKRLVSEGGARINDVAVSDAARLLGPADVQDGAIKLSAGKKRHALIRVLPG.

Tyr-39 serves as a coordination point for L-tyrosine. The 'HIGH' region signature appears at Cys-44–Ser-53. The L-tyrosine site is built by Tyr-176 and Gln-180. Residues Lys-236–Thr-240 carry the 'KMSKS' region motif. Lys-239 lines the ATP pocket. The S4 RNA-binding domain maps to Leu-350–Leu-416.

The protein belongs to the class-I aminoacyl-tRNA synthetase family. TyrS type 1 subfamily. In terms of assembly, homodimer.

It is found in the cytoplasm. The enzyme catalyses tRNA(Tyr) + L-tyrosine + ATP = L-tyrosyl-tRNA(Tyr) + AMP + diphosphate + H(+). In terms of biological role, catalyzes the attachment of tyrosine to tRNA(Tyr) in a two-step reaction: tyrosine is first activated by ATP to form Tyr-AMP and then transferred to the acceptor end of tRNA(Tyr). The polypeptide is Tyrosine--tRNA ligase (Rhodospirillum rubrum (strain ATCC 11170 / ATH 1.1.1 / DSM 467 / LMG 4362 / NCIMB 8255 / S1)).